The following is a 221-amino-acid chain: Small ribosomal subunit protein uS2c (221 aa).

The protein belongs to the universal ribosomal protein uS2 family.

The protein localises to the plastid. It localises to the chloroplast. This is Small ribosomal subunit protein uS2c (rps2) from Cyanidioschyzon merolae (strain NIES-3377 / 10D) (Unicellular red alga).